We begin with the raw amino-acid sequence, 272 residues long: 2-succinyl-6-hydroxy-2,4-cyclohexadiene-1-carboxylate synthase (272 aa).

The protein belongs to the AB hydrolase superfamily. MenH family. In terms of assembly, monomer.

The catalysed reaction is 5-enolpyruvoyl-6-hydroxy-2-succinyl-cyclohex-3-ene-1-carboxylate = (1R,6R)-6-hydroxy-2-succinyl-cyclohexa-2,4-diene-1-carboxylate + pyruvate. It participates in quinol/quinone metabolism; 1,4-dihydroxy-2-naphthoate biosynthesis; 1,4-dihydroxy-2-naphthoate from chorismate: step 3/7. The protein operates within quinol/quinone metabolism; menaquinone biosynthesis. Functionally, catalyzes a proton abstraction reaction that results in 2,5-elimination of pyruvate from 2-succinyl-5-enolpyruvyl-6-hydroxy-3-cyclohexene-1-carboxylate (SEPHCHC) and the formation of 2-succinyl-6-hydroxy-2,4-cyclohexadiene-1-carboxylate (SHCHC). The polypeptide is 2-succinyl-6-hydroxy-2,4-cyclohexadiene-1-carboxylate synthase (Yersinia pestis bv. Antiqua (strain Nepal516)).